The primary structure comprises 80 residues: Small ribosomal subunit protein uS17 (80 aa).

This sequence belongs to the universal ribosomal protein uS17 family. In terms of assembly, part of the 30S ribosomal subunit.

Functionally, one of the primary rRNA binding proteins, it binds specifically to the 5'-end of 16S ribosomal RNA. This chain is Small ribosomal subunit protein uS17, found in Chelativorans sp. (strain BNC1).